Consider the following 338-residue polypeptide: Fructose-1,6-bisphosphatase class 1 (338 aa).

Positions 90, 112, 114, and 115 each coordinate Mg(2+). Substrate-binding positions include Asp115–Ser118, Asn207, and Lys273. A Mg(2+)-binding site is contributed by Glu279.

It belongs to the FBPase class 1 family. In terms of assembly, homotetramer. Requires Mg(2+) as cofactor.

The protein resides in the cytoplasm. The catalysed reaction is beta-D-fructose 1,6-bisphosphate + H2O = beta-D-fructose 6-phosphate + phosphate. Its pathway is carbohydrate biosynthesis; gluconeogenesis. This is Fructose-1,6-bisphosphatase class 1 from Xanthomonas campestris pv. campestris (strain 8004).